A 503-amino-acid chain; its full sequence is ATP synthase subunit alpha (503 aa).

169–176 (GDRQTGKT) serves as a coordination point for ATP.

It belongs to the ATPase alpha/beta chains family. As to quaternary structure, F-type ATPases have 2 components, CF(1) - the catalytic core - and CF(0) - the membrane proton channel. CF(1) has five subunits: alpha(3), beta(3), gamma(1), delta(1), epsilon(1). CF(0) has three main subunits: a(1), b(2) and c(9-12). The alpha and beta chains form an alternating ring which encloses part of the gamma chain. CF(1) is attached to CF(0) by a central stalk formed by the gamma and epsilon chains, while a peripheral stalk is formed by the delta and b chains.

Its subcellular location is the cell membrane. The enzyme catalyses ATP + H2O + 4 H(+)(in) = ADP + phosphate + 5 H(+)(out). Its function is as follows. Produces ATP from ADP in the presence of a proton gradient across the membrane. The alpha chain is a regulatory subunit. This chain is ATP synthase subunit alpha, found in Macrococcus caseolyticus (strain JCSC5402) (Macrococcoides caseolyticum).